Reading from the N-terminus, the 194-residue chain is dTTP/UTP pyrophosphatase (194 aa).

Asp76 (proton acceptor) is an active-site residue.

It belongs to the Maf family. YhdE subfamily. It depends on a divalent metal cation as a cofactor.

The protein localises to the cytoplasm. It carries out the reaction dTTP + H2O = dTMP + diphosphate + H(+). The enzyme catalyses UTP + H2O = UMP + diphosphate + H(+). Nucleoside triphosphate pyrophosphatase that hydrolyzes dTTP and UTP. May have a dual role in cell division arrest and in preventing the incorporation of modified nucleotides into cellular nucleic acids. The sequence is that of dTTP/UTP pyrophosphatase from Shewanella sp. (strain MR-7).